A 124-amino-acid chain; its full sequence is Sulfur globule protein CV2 (124 aa).

A signal peptide spans 1 to 22 (MKKLATAAAVAALLGASASASA).

In terms of assembly, the protein envelope of the sulfur globules is composed of the three different proteins CV1, CV2 and CV3.

Its function is as follows. Structural protein of the sulfur globules, which are intracellular globules that serve for sulfur storage in purple sulfur bacteria. In Allochromatium vinosum (strain ATCC 17899 / DSM 180 / NBRC 103801 / NCIMB 10441 / D) (Chromatium vinosum), this protein is Sulfur globule protein CV2 (sgpB).